Here is a 286-residue protein sequence, read N- to C-terminus: ATP synthase gamma chain (286 aa).

This sequence belongs to the ATPase gamma chain family. F-type ATPases have 2 components, CF(1) - the catalytic core - and CF(0) - the membrane proton channel. CF(1) has five subunits: alpha(3), beta(3), gamma(1), delta(1), epsilon(1). CF(0) has three main subunits: a, b and c.

The protein localises to the cell inner membrane. Its function is as follows. Produces ATP from ADP in the presence of a proton gradient across the membrane. The gamma chain is believed to be important in regulating ATPase activity and the flow of protons through the CF(0) complex. This chain is ATP synthase gamma chain, found in Pseudomonas entomophila (strain L48).